The chain runs to 883 residues: Translation initiation factor IF-2 (883 aa).

Residues Met-1–Thr-259 are disordered. Low complexity-rich tracts occupy residues Lys-10 to Lys-22 and Pro-77 to Ser-89. Residues Ala-113–Ala-184 show a composition bias toward basic and acidic residues. Residues Glu-185–Glu-218 are compositionally biased toward low complexity. Residues Pro-235 to Gln-244 show a composition bias toward pro residues. The tr-type G domain occupies Pro-379 to Glu-548. Residues Gly-388–Thr-395 are G1. Residue Gly-388–Thr-395 participates in GTP binding. The G2 stretch occupies residues Gly-413–His-417. The G3 stretch occupies residues Asp-436–Gly-439. GTP contacts are provided by residues Asp-436–His-440 and Asn-490–Asp-493. The interval Asn-490–Asp-493 is G4. A G5 region spans residues Ser-526 to Lys-528.

Belongs to the TRAFAC class translation factor GTPase superfamily. Classic translation factor GTPase family. IF-2 subfamily.

It is found in the cytoplasm. One of the essential components for the initiation of protein synthesis. Protects formylmethionyl-tRNA from spontaneous hydrolysis and promotes its binding to the 30S ribosomal subunits. Also involved in the hydrolysis of GTP during the formation of the 70S ribosomal complex. The sequence is that of Translation initiation factor IF-2 from Rhodopseudomonas palustris (strain ATCC BAA-98 / CGA009).